Here is a 143-residue protein sequence, read N- to C-terminus: Nucleoside diphosphate kinase (143 aa).

Lysine 11, phenylalanine 59, arginine 87, threonine 93, arginine 104, and asparagine 114 together coordinate ATP. The active-site Pros-phosphohistidine intermediate is the histidine 117.

The protein belongs to the NDK family. As to quaternary structure, homotetramer. Mg(2+) is required as a cofactor.

It localises to the cytoplasm. It carries out the reaction a 2'-deoxyribonucleoside 5'-diphosphate + ATP = a 2'-deoxyribonucleoside 5'-triphosphate + ADP. The enzyme catalyses a ribonucleoside 5'-diphosphate + ATP = a ribonucleoside 5'-triphosphate + ADP. Major role in the synthesis of nucleoside triphosphates other than ATP. The ATP gamma phosphate is transferred to the NDP beta phosphate via a ping-pong mechanism, using a phosphorylated active-site intermediate. In Escherichia coli O7:K1 (strain IAI39 / ExPEC), this protein is Nucleoside diphosphate kinase.